Here is a 696-residue protein sequence, read N- to C-terminus: Polyribonucleotide nucleotidyltransferase (696 aa).

Asp-483 and Asp-489 together coordinate Mg(2+). The KH domain occupies 550–609 (PRITTIWVKVDKIRDVIGSGGKNIRSVTEATGVSIDIDDTGKINIASTNKEACDLAIKMI). One can recognise an S1 motif domain in the interval 619-687 (GKLYMGTVKK…KQGKIKLSRK (69 aa)).

This sequence belongs to the polyribonucleotide nucleotidyltransferase family. It depends on Mg(2+) as a cofactor.

It is found in the cytoplasm. It carries out the reaction RNA(n+1) + phosphate = RNA(n) + a ribonucleoside 5'-diphosphate. In terms of biological role, involved in mRNA degradation. Catalyzes the phosphorolysis of single-stranded polyribonucleotides processively in the 3'- to 5'-direction. This Geobacter sp. (strain M21) protein is Polyribonucleotide nucleotidyltransferase.